The following is a 138-amino-acid chain: Large ribosomal subunit protein eL32 (138 aa).

It belongs to the eukaryotic ribosomal protein eL32 family.

The sequence is that of Large ribosomal subunit protein eL32 from Saccharolobus islandicus (strain Y.N.15.51 / Yellowstone #2) (Sulfolobus islandicus).